Here is a 531-residue protein sequence, read N- to C-terminus: 5-(hydroxymethyl)furfural oxidase (531 aa).

Residues 15–16 (TA), 36–37 (EA), Trp-68, Leu-94, Gly-98, 102–105 (NMVV), Val-233, and Trp-466 each bind FAD. His-467 acts as the Proton acceptor in catalysis. FAD-binding positions include Ala-501 and 512 to 513 (TN).

It belongs to the GMC oxidoreductase family. Monomer. FAD serves as cofactor.

It carries out the reaction 5-hydroxymethylfurfural + 3 O2 + 2 H2O = 2,5-dicarboxyfuran + 3 H2O2 + 2 H(+). It catalyses the reaction benzylthiol + O2 = benzothialdehyde + H2O2. Involved in the degradation and detoxification of 5-(hydroxymethyl)furfural (HMF) by mediating its oxidation to furan-2,5-dicarboxylate (FDCA), a biobased platform chemical for the production of polymers. Active with a wide range of aromatic and aliphatic primary alcohols and aldehydes: acts on alcohol groups and requires the spontaneous hydration of aldehyde groups for their oxidation. To a lesser extent, is also able to catalyze the oxidation of thiols that are structurally similar to its alcohol substrates, yielding the corresponding thiocarbonyls. This Methylovorus sp. (strain MP688) protein is 5-(hydroxymethyl)furfural oxidase.